Here is a 94-residue protein sequence, read N- to C-terminus: Integration host factor subunit beta (94 aa).

The protein belongs to the bacterial histone-like protein family. Heterodimer of an alpha and a beta chain.

This protein is one of the two subunits of integration host factor, a specific DNA-binding protein that functions in genetic recombination as well as in transcriptional and translational control. The chain is Integration host factor subunit beta from Escherichia coli (strain UTI89 / UPEC).